Consider the following 379-residue polypeptide: MTSVAKVYYSQTTQTESRPLMGPGIRRRRVLTKDGRSNVRMEHIADKRFLYLKDLWTTFIDMQWRYKLLLFSATFAGTWFLFGVVWYLVAVAHGDLLELDPPANHTPCVVQVHTLTGAFLFSLESQTTIGYGFRYISEECPLAIVLLIAQLVLTTILEIFITGTFLAKIARPKKRAETIRFSQHAVVASHNGKPCLMIRVANMRKSLLIGCQVTGKLLQTHQTKEGENIRLNQVNVTFQVDTASDSPFLILPLTFYHVVDETSPLKDLPLRSGEGDFELVLILSGTVESTSATCQVRTSYLPEEILWGYEFTPAISLSASGKYIADFSLFDQVVKVASPSGLRDSTVRYGDPEKLKLEESLREQAEKEGSALSVRISNV.

At 1 to 61 (MTSVAKVYYS…LKDLWTTFID (61 aa)) the chain is on the cytoplasmic side. Arg-36 contributes to the 1,2-dioctanoyl-sn-glycero-3-phospho-(1D-myo-inositol-4,5-bisphosphate) binding site. The helical transmembrane segment at 62–88 (MQWRYKLLLFSATFAGTWFLFGVVWYL) threads the bilayer. Residues 89 to 114 (VAVAHGDLLELDPPANHTPCVVQVHT) lie on the Extracellular side of the membrane. Cys-108 and Cys-140 are joined by a disulfide. The discontinuously helical; Pore-forming intramembrane region spans 115–131 (LTGAFLFSLESQTTIGY). The Selectivity filter motif lies at 128-133 (TIGYGF). Residues 132-140 (GFRYISEEC) lie on the Extracellular side of the membrane. The helical transmembrane segment at 141–166 (PLAIVLLIAQLVLTTILEIFITGTFL) threads the bilayer. The Cytoplasmic segment spans residues 167-379 (AKIARPKKRA…SALSVRISNV (213 aa)). 1,2-dioctanoyl-sn-glycero-3-phospho-(1D-myo-inositol-4,5-bisphosphate) is bound by residues Lys-168, Arg-171, and Lys-173. 210 to 217 (GCQVTGKL) lines the ATP pocket.

This sequence belongs to the inward rectifier-type potassium channel (TC 1.A.2.1) family. KCNJ10 subfamily. Homotetramer. In kidney cells, it forms heteromeric channels with Kir5.1/KCNJ16; this interaction is required for KCNJ16 localization to the basolateral membrane. Interacts with MAGI1, alone and possibly as a heteromer with KCNJ16; this interaction may facilitate KCNJ10/KCNJ16 potassium channel expression at the basolateral membrane in kidney cells. Interacts with PATJ. As to expression, expressed in kidney (at protein level). In the nephron, expressed in the distal convoluted tubule, the connecting tubule, the collecting duct and cortical thick ascending limbs.

Its subcellular location is the membrane. It localises to the basolateral cell membrane. The catalysed reaction is K(+)(in) = K(+)(out). Channel activity is strongly regulated by variations of cytosolic pH; channels are activated by alkaline and inhibited by acidic pH values. Inhibited by Ba(2+) and Cs(+). Activated by phosphatidylinositol 4,5 biphosphate (PtdIns(4,5)P2). Functionally, may be responsible for potassium buffering action of glial cells in the brain. Inward rectifier potassium channels are characterized by a greater tendency to allow potassium to flow into the cell rather than out of it. Their voltage dependence is regulated by the concentration of extracellular potassium; as external potassium is raised, the voltage range of the channel opening shifts to more positive voltages. The inward rectification is mainly due to the blockage of outward current by internal magnesium. Can be blocked by extracellular barium and cesium. In the kidney, together with KCNJ16, mediates basolateral K(+) recycling in distal tubules; this process is critical for Na(+) reabsorption at the tubules. The polypeptide is ATP-sensitive inward rectifier potassium channel 10 (Homo sapiens (Human)).